A 536-amino-acid chain; its full sequence is MRETGIHNTAASIATSGLKEISAVFYNLGAARLYEETVRRGEAELSAQGALVARTGQHTGRSPKDKFVVRDADTEDHVWWDNNKPMSREAFELLYADFIDHAKGKELFVQDLIGGADADNKINARVITEYAWHSLFIRNLLIRPEQEALASYVPEMTIIDLPTFKADPERYGVRTETVIAVDLTRKIVLIGGTSYAGEMKKSVFTALNYILPAKGVMPMHCSANEGPNGDTAVFFGLSGTGKTTLSADPTRTLIGDDEHGWGEHGIFNFEGGCYAKTIRLSAEAEPEIYATTQRFGTVLENVVLDENRQPDFDDGSLTENTRCAYPLDFIPNASKSGKGGQPKNIIMLTADAFGVMPPIAKLTPAQAMYHFLSGYTAKVAGTEKGVTEPEATFSTCFGAPFMPRHPSEYGNLLRKLIAEHKVDCWLVNTGWTGGAYGVGKRMPIKATRALLAAALDGSLNDAEFRIDPNFGFAVPVDVPGVDTSILDPRSTWADKAAYDAQAKKLVDMFVTNFEKFESHVDHEVKDAAPAIRIAAE.

Arg61, Tyr195, and Lys201 together coordinate substrate. ATP is bound by residues Lys201, His220, and 236–244 (GLSGTGKTT). 2 residues coordinate Mn(2+): Lys201 and His220. Position 257 (Asp257) interacts with Mn(2+). Positions 285, 322, and 447 each coordinate ATP. Arg322 is a substrate binding site.

It belongs to the phosphoenolpyruvate carboxykinase (ATP) family. Mn(2+) is required as a cofactor.

Its subcellular location is the cytoplasm. The enzyme catalyses oxaloacetate + ATP = phosphoenolpyruvate + ADP + CO2. The protein operates within carbohydrate biosynthesis; gluconeogenesis. Functionally, involved in the gluconeogenesis. Catalyzes the conversion of oxaloacetate (OAA) to phosphoenolpyruvate (PEP) through direct phosphoryl transfer between the nucleoside triphosphate and OAA. The chain is Phosphoenolpyruvate carboxykinase (ATP) from Brucella anthropi (strain ATCC 49188 / DSM 6882 / CCUG 24695 / JCM 21032 / LMG 3331 / NBRC 15819 / NCTC 12168 / Alc 37) (Ochrobactrum anthropi).